Consider the following 445-residue polypeptide: Trigger factor (445 aa).

Residues G162–T247 form the PPIase FKBP-type domain.

Belongs to the FKBP-type PPIase family. Tig subfamily.

Its subcellular location is the cytoplasm. It catalyses the reaction [protein]-peptidylproline (omega=180) = [protein]-peptidylproline (omega=0). In terms of biological role, involved in protein export. Acts as a chaperone by maintaining the newly synthesized protein in an open conformation. Functions as a peptidyl-prolyl cis-trans isomerase. This Rickettsia rickettsii (strain Sheila Smith) protein is Trigger factor.